The following is a 188-amino-acid chain: Elongation factor P (188 aa).

N6-(3,6-diaminohexanoyl)-5-hydroxylysine is present on K34.

Belongs to the elongation factor P family. Post-translationally, may be beta-lysylated on the epsilon-amino group of Lys-34 by the combined action of EpmA and EpmB, and then hydroxylated on the C5 position of the same residue by EpmC (if this protein is present). Lysylation is critical for the stimulatory effect of EF-P on peptide-bond formation. The lysylation moiety may extend toward the peptidyltransferase center and stabilize the terminal 3-CCA end of the tRNA. Hydroxylation of the C5 position on Lys-34 may allow additional potential stabilizing hydrogen-bond interactions with the P-tRNA.

It is found in the cytoplasm. The protein operates within protein biosynthesis; polypeptide chain elongation. Functionally, involved in peptide bond synthesis. Alleviates ribosome stalling that occurs when 3 or more consecutive Pro residues or the sequence PPG is present in a protein, possibly by augmenting the peptidyl transferase activity of the ribosome. Modification of Lys-34 is required for alleviation. The protein is Elongation factor P of Pasteurella multocida (strain Pm70).